Consider the following 196-residue polypeptide: Inosine triphosphate pyrophosphatase 2 (196 aa).

20–25 lines the ITP pocket; it reads TGNDGK. Residue Glu48 coordinates Mg(2+). ITP is bound by residues Lys61, 77–78, Lys94, 153–156, Lys177, and 182–183; these read DT, FGWD, and PR.

The protein belongs to the HAM1 NTPase family. In terms of assembly, homodimer. It depends on Mg(2+) as a cofactor. Mn(2+) is required as a cofactor.

Its subcellular location is the cytoplasm. The enzyme catalyses ITP + H2O = IMP + diphosphate + H(+). The catalysed reaction is dITP + H2O = dIMP + diphosphate + H(+). It carries out the reaction XTP + H2O = XMP + diphosphate + H(+). In terms of biological role, pyrophosphatase that hydrolyzes non-canonical purine nucleotides such as inosine triphosphate (ITP), deoxyinosine triphosphate (dITP) or xanthosine 5'-triphosphate (XTP) to their respective monophosphate derivatives. The enzyme does not distinguish between the deoxy- and ribose forms. Probably excludes non-canonical purines from RNA and DNA precursor pools, thus preventing their incorporation into RNA and DNA and avoiding chromosomal lesions. This Trypanosoma cruzi (strain CL Brener) protein is Inosine triphosphate pyrophosphatase 2.